A 190-amino-acid chain; its full sequence is Protein GrpE (190 aa).

Residues 1–41 (MAKEKQEEQQKQTAPENEKAPKKDIKKEASDKKGDQTSKLK) form a disordered region.

The protein belongs to the GrpE family. In terms of assembly, homodimer.

Its subcellular location is the cytoplasm. Functionally, participates actively in the response to hyperosmotic and heat shock by preventing the aggregation of stress-denatured proteins, in association with DnaK and GrpE. It is the nucleotide exchange factor for DnaK and may function as a thermosensor. Unfolded proteins bind initially to DnaJ; upon interaction with the DnaJ-bound protein, DnaK hydrolyzes its bound ATP, resulting in the formation of a stable complex. GrpE releases ADP from DnaK; ATP binding to DnaK triggers the release of the substrate protein, thus completing the reaction cycle. Several rounds of ATP-dependent interactions between DnaJ, DnaK and GrpE are required for fully efficient folding. In Limosilactobacillus reuteri (strain DSM 20016) (Lactobacillus reuteri), this protein is Protein GrpE.